A 161-amino-acid polypeptide reads, in one-letter code: Large ribosomal subunit protein uL15 (161 aa).

A compositionally biased stretch (basic and acidic residues) spans 1–13 (MKLNELRDNEGAA). The interval 1–51 (MKLNELRDNEGAARKKKRVARGPGSGKGKTAGRGIKGQKSRSGVALNGYEG) is disordered. Over residues 23 to 35 (PGSGKGKTAGRGI) the composition is skewed to gly residues.

Belongs to the universal ribosomal protein uL15 family. As to quaternary structure, part of the 50S ribosomal subunit.

Functionally, binds to the 23S rRNA. The chain is Large ribosomal subunit protein uL15 from Cereibacter sphaeroides (strain ATCC 17023 / DSM 158 / JCM 6121 / CCUG 31486 / LMG 2827 / NBRC 12203 / NCIMB 8253 / ATH 2.4.1.) (Rhodobacter sphaeroides).